An 881-amino-acid chain; its full sequence is Band 4.1-like protein 1 (881 aa).

Residue M1 is modified to N-acetylmethionine. The disordered stretch occupies residues M1–Q88. Positions E17 to A35 are enriched in low complexity. T30 is modified (phosphothreonine). Over residues G38–S50 the composition is skewed to basic and acidic residues. S75 bears the Phosphoserine mark. Residues E76–P87 show a composition bias toward polar residues. T79 carries the post-translational modification Phosphothreonine. An FERM domain is found at A97–S378. Position 343 is a phosphotyrosine (Y343). Phosphoserine occurs at positions 378, 430, and 437. The tract at residues S428–E501 is disordered. Residues E444–E457 are compositionally biased toward basic and acidic residues. Residues S461 and S466 each carry the phosphoserine modification. Residues S466–E501 are compositionally biased toward basic and acidic residues. Position 475 is a phosphothreonine (T475). The segment at K483–S541 is spectrin--actin-binding. S510 carries the post-translational modification Phosphoserine. The span at L514 to L538 shows a compositional bias: basic and acidic residues. The tract at residues L514–D596 is disordered. Phosphoserine occurs at positions 540, 541, 544, and 546. A Phosphothreonine modification is found at T550. Over residues T550–E577 the composition is skewed to basic and acidic residues. Residues S564 and S578 each carry the phosphoserine modification. T580 carries the phosphothreonine modification. Phosphoserine is present on residues S639, S648, S650, S667, S672, S678, and S685. Positions E642–T699 are disordered. Phosphothreonine is present on T686. 3 positions are modified to phosphoserine: S722, S784, and S870. The tract at residues S746–S881 is C-terminal (CTD).

Interacts with AGAP2. As to expression, highest expression in brain, lower in heart, kidney, pancreas, placenta, lung and skeletal muscle.

The protein localises to the cytoplasm. Its subcellular location is the cytoskeleton. Functionally, may function to confer stability and plasticity to neuronal membrane via multiple interactions, including the spectrin-actin-based cytoskeleton, integral membrane channels and membrane-associated guanylate kinases. The chain is Band 4.1-like protein 1 from Homo sapiens (Human).